The sequence spans 898 residues: Endoplasmic reticulum metallopeptidase 1 (898 aa).

Methionine 1 carries the post-translational modification N-acetylmethionine. The tract at residues 1-59 (MEWSSESAAVRRHRGTAERREGQAAASHPQREASAQEDARGGGRMRGRTESGGESRGAK) is disordered. Topologically, residues 1–66 (MEWSSESAAV…GAKTALSEAR (66 aa)) are cytoplasmic. A compositionally biased stretch (basic and acidic residues) spans 37-57 (EDARGGGRMRGRTESGGESRG). Residues 67-87 (TALALALYLLALRALVQLSLQ) form a helical membrane-spanning segment. The Lumenal portion of the chain corresponds to 88–393 (RLVLSRTSGL…SSSEYRHGSM (306 aa)). A glycan (N-linked (GlcNAc...) asparagine) is linked at asparagine 176. Cysteine 198 and cysteine 216 are disulfide-bonded. Residues histidine 199 and aspartate 211 each contribute to the Zn(2+) site. The active-site Proton acceptor is the glutamate 245. Zn(2+) contacts are provided by glutamate 246, glutamate 272, and histidine 348. Residues 394 to 414 (VFFDVLGLLVIAYPSRVGSII) form a helical membrane-spanning segment. At 415-451 (NYMVVMAVVLYLGRKLLRPNHSNSNYVRDFLCGLGIT) the chain is on the cytoplasmic side. Residues 452-472 (FISWFTSLVTVLIIAVFVSLI) form a helical membrane-spanning segment. The Lumenal segment spans residues 473-480 (GQSLSWYN). Residues 481–501 (YFYIAVCLYGTATVAKIILIH) traverse the membrane as a helical segment. At 502–515 (TLAKRFYYVNASDL) the chain is on the cytoplasmic side. Residues 516–538 (YLGELFFDTSLFVHCGFLVALTA) form a helical membrane-spanning segment. Residues 539–542 (QGFC) are Lumenal-facing. The helical transmembrane segment at 543 to 562 (SAFMSAVWVAFPLLTKLCVY) threads the bilayer. Over 563–573 (KDFKKHGAKGR) the chain is Cytoplasmic. Residues 574 to 594 (FIALYLLGMFIPYLYGLYLIW) form a helical membrane-spanning segment. The Lumenal segment spans residues 595–615 (AVFEMFTPILGRSGSEIPPDV). Residues 616–636 (VLASILAVCVMILSSYFITFI) form a helical membrane-spanning segment. Over 637–645 (YLVNSTKKT) the chain is Cytoplasmic. A helical transmembrane segment spans residues 646 to 666 (ILTLILVCAVTFLLVCSGAFF). Residues 667-898 (PYSSNPDSPK…WVSTYSLFVF (232 aa)) are Lumenal-facing. An N-linked (GlcNAc...) asparagine glycan is attached at asparagine 724.

The protein belongs to the peptidase M28 family. Requires Zn(2+) as cofactor. As to expression, widely expressed, with highest levels in ovary, kidney, hypothalamus and hippocampus. Within the ovarian follicle, expressed in granulosa cells, but not in oocytes. Present in both preantral and antral follicles, but not in atretic antral follicle.

Its subcellular location is the endoplasmic reticulum membrane. Its function is as follows. Within the ovary, required for the organization of somatic cells and oocytes into discrete follicular structures. The polypeptide is Endoplasmic reticulum metallopeptidase 1 (Rattus norvegicus (Rat)).